The following is a 287-amino-acid chain: Elongation factor Ts (287 aa).

The tract at residues 80 to 83 is involved in Mg(2+) ion dislocation from EF-Tu; it reads TDFL.

The protein belongs to the EF-Ts family.

The protein resides in the cytoplasm. Associates with the EF-Tu.GDP complex and induces the exchange of GDP to GTP. It remains bound to the aminoacyl-tRNA.EF-Tu.GTP complex up to the GTP hydrolysis stage on the ribosome. In Pseudomonas fluorescens (strain SBW25), this protein is Elongation factor Ts.